The chain runs to 338 residues: Ketol-acid reductoisomerase (NADP(+)) (338 aa).

In terms of domain architecture, KARI N-terminal Rossmann spans 1 to 181 (MKVYYDKDAD…GGTKGGVIET (181 aa)). NADP(+) is bound by residues 24–27 (YGSQ), arginine 47, and serine 52. Histidine 107 is an active-site residue. Residue glycine 133 participates in NADP(+) binding. The KARI C-terminal knotted domain occupies 182 to 327 (NFREETETDL…GQLRDMMPWI (146 aa)). Aspartate 190, glutamate 194, glutamate 226, and glutamate 230 together coordinate Mg(2+). Residue serine 251 coordinates substrate.

It belongs to the ketol-acid reductoisomerase family. Requires Mg(2+) as cofactor.

The catalysed reaction is (2R)-2,3-dihydroxy-3-methylbutanoate + NADP(+) = (2S)-2-acetolactate + NADPH + H(+). It catalyses the reaction (2R,3R)-2,3-dihydroxy-3-methylpentanoate + NADP(+) = (S)-2-ethyl-2-hydroxy-3-oxobutanoate + NADPH + H(+). The protein operates within amino-acid biosynthesis; L-isoleucine biosynthesis; L-isoleucine from 2-oxobutanoate: step 2/4. It functions in the pathway amino-acid biosynthesis; L-valine biosynthesis; L-valine from pyruvate: step 2/4. In terms of biological role, involved in the biosynthesis of branched-chain amino acids (BCAA). Catalyzes an alkyl-migration followed by a ketol-acid reduction of (S)-2-acetolactate (S2AL) to yield (R)-2,3-dihydroxy-isovalerate. In the isomerase reaction, S2AL is rearranged via a Mg-dependent methyl migration to produce 3-hydroxy-3-methyl-2-ketobutyrate (HMKB). In the reductase reaction, this 2-ketoacid undergoes a metal-dependent reduction by NADPH to yield (R)-2,3-dihydroxy-isovalerate. This Aromatoleum aromaticum (strain DSM 19018 / LMG 30748 / EbN1) (Azoarcus sp. (strain EbN1)) protein is Ketol-acid reductoisomerase (NADP(+)).